The following is a 447-amino-acid chain: MSTVTTPSAPKVGFVSLGCPKALVDSERILTQLRMEGYEVVATYEDADVVVVNTCGFIDTAKAESLEVIGEAIKENGKVIVTGCMGVDASVIRNVHPSVLSVTGPQQYEQVVNAVHDVVPPRKDHNPLIDLVPPQGVKLTPRHYAYLKISEGCNHSCSFCIIPSMRGKLVSRPVGDVLDEAKRLVKSGVKELLVISQDTSAYGVDVKYRTGFWDGQPVKTRMTELCQALGSMGVWVRLHYVYPYPHVDELIPLMAAGKILPYLDIPFQHASPKILKLMKRPAFEDKTLARIKNWREQCPDLIIRSTFIVGFPGETEEDFQYLLDWLTEAQLDRVGCFQYSPVEGAPANLLDAAIVPDDVKQDRWDRFMAHQQAISAARLQMKIGKEIEVLIDEVDDRGAVGRCFFDAPEIDGNVFIGLDDGSTVQPGDKIMCRVTDADEYDLWAEML.

Residues 10–120 (PKVGFVSLGC…VVNAVHDVVP (111 aa)) form the MTTase N-terminal domain. Positions 19, 55, 84, 153, 157, and 160 each coordinate [4Fe-4S] cluster. The 239-residue stretch at 139–377 (LTPRHYAYLK…MAHQQAISAA (239 aa)) folds into the Radical SAM core domain. One can recognise a TRAM domain in the interval 380 to 447 (QMKIGKEIEV…DEYDLWAEML (68 aa)).

Belongs to the methylthiotransferase family. RimO subfamily. [4Fe-4S] cluster is required as a cofactor.

It localises to the cytoplasm. The catalysed reaction is L-aspartate(89)-[ribosomal protein uS12]-hydrogen + (sulfur carrier)-SH + AH2 + 2 S-adenosyl-L-methionine = 3-methylsulfanyl-L-aspartate(89)-[ribosomal protein uS12]-hydrogen + (sulfur carrier)-H + 5'-deoxyadenosine + L-methionine + A + S-adenosyl-L-homocysteine + 2 H(+). Its function is as follows. Catalyzes the methylthiolation of an aspartic acid residue of ribosomal protein uS12. The chain is Ribosomal protein uS12 methylthiotransferase RimO from Pseudomonas syringae pv. syringae (strain B728a).